The chain runs to 60 residues: Beta-defensin 11 (60 aa).

Positions 1–22 (MRLHHLLLALLFLVLSAGSGIS) are cleaved as a signal peptide. Intrachain disulfides connect Cys-27/Cys-56, Cys-34/Cys-49, and Cys-39/Cys-57.

This sequence belongs to the beta-defensin family. Neutrophilic granules.

It localises to the secreted. Functionally, has bactericidal activity. Active against E.coli ML35 and S.aureus 502A. In Bos taurus (Bovine), this protein is Beta-defensin 11 (DEFB11).